Here is a 241-residue protein sequence, read N- to C-terminus: Uridylate kinase (241 aa).

12-15 (KISG) is a binding site for ATP. The segment at 20–25 (GDKGNG) is involved in allosteric activation by GTP. G54 lines the UMP pocket. ATP-binding residues include G55 and R59. UMP-binding positions include D74 and 135–142 (TGNPYFST). The ATP site is built by N163, Y169, and D172.

It belongs to the UMP kinase family. As to quaternary structure, homohexamer.

Its subcellular location is the cytoplasm. The catalysed reaction is UMP + ATP = UDP + ADP. It functions in the pathway pyrimidine metabolism; CTP biosynthesis via de novo pathway; UDP from UMP (UMPK route): step 1/1. Allosterically activated by GTP. Inhibited by UTP. Catalyzes the reversible phosphorylation of UMP to UDP. The chain is Uridylate kinase from Lactobacillus acidophilus (strain ATCC 700396 / NCK56 / N2 / NCFM).